Here is a 434-residue protein sequence, read N- to C-terminus: Ribosomal protein uS12 methylthiotransferase RimO (434 aa).

One can recognise an MTTase N-terminal domain in the interval Asn-4–Tyr-122. The [4Fe-4S] cluster site is built by Cys-13, Cys-51, Cys-85, Cys-146, Cys-150, and Cys-153. The 232-residue stretch at Thr-132–Ala-363 folds into the Radical SAM core domain. The 69-residue stretch at Glu-366–Asp-434 folds into the TRAM domain.

This sequence belongs to the methylthiotransferase family. RimO subfamily. The cofactor is [4Fe-4S] cluster.

The protein resides in the cytoplasm. The catalysed reaction is L-aspartate(89)-[ribosomal protein uS12]-hydrogen + (sulfur carrier)-SH + AH2 + 2 S-adenosyl-L-methionine = 3-methylsulfanyl-L-aspartate(89)-[ribosomal protein uS12]-hydrogen + (sulfur carrier)-H + 5'-deoxyadenosine + L-methionine + A + S-adenosyl-L-homocysteine + 2 H(+). Catalyzes the methylthiolation of an aspartic acid residue of ribosomal protein uS12. The sequence is that of Ribosomal protein uS12 methylthiotransferase RimO from Porphyromonas gingivalis (strain ATCC 33277 / DSM 20709 / CIP 103683 / JCM 12257 / NCTC 11834 / 2561).